Consider the following 604-residue polypeptide: Glutamyl-tRNA(Gln) amidotransferase subunit B, mitochondrial (604 aa).

The transit peptide at 1–48 (MIRQCLSRRGAYSRYRLAARGVELAEPFHHQSSRPQGRRNWSSSPRCS) directs the protein to the mitochondrion. Residues 28–57 (FHHQSSRPQGRRNWSSSPRCSLDIRTDTPR) are disordered. Residues 33 to 46 (SRPQGRRNWSSSPR) are compositionally biased toward polar residues.

Belongs to the GatB/GatE family. GatB subfamily. Subunit of the heterotrimeric GatCAB amidotransferase (AdT) complex, composed of A, B and C subunits.

The protein resides in the mitochondrion. The enzyme catalyses L-glutamyl-tRNA(Gln) + L-glutamine + ATP + H2O = L-glutaminyl-tRNA(Gln) + L-glutamate + ADP + phosphate + H(+). Allows the formation of correctly charged Gln-tRNA(Gln) through the transamidation of misacylated Glu-tRNA(Gln) in the mitochondria. The reaction takes place in the presence of glutamine and ATP through an activated gamma-phospho-Glu-tRNA(Gln). The sequence is that of Glutamyl-tRNA(Gln) amidotransferase subunit B, mitochondrial from Ajellomyces dermatitidis (strain ER-3 / ATCC MYA-2586) (Blastomyces dermatitidis).